The chain runs to 499 residues: Glutamyl-tRNA(Gln) amidotransferase subunit A (499 aa).

Catalysis depends on charge relay system residues Lys-80 and Ser-155. Ser-179 functions as the Acyl-ester intermediate in the catalytic mechanism.

Belongs to the amidase family. GatA subfamily. Heterotrimer of A, B and C subunits.

It carries out the reaction L-glutamyl-tRNA(Gln) + L-glutamine + ATP + H2O = L-glutaminyl-tRNA(Gln) + L-glutamate + ADP + phosphate + H(+). In terms of biological role, allows the formation of correctly charged Gln-tRNA(Gln) through the transamidation of misacylated Glu-tRNA(Gln) in organisms which lack glutaminyl-tRNA synthetase. The reaction takes place in the presence of glutamine and ATP through an activated gamma-phospho-Glu-tRNA(Gln). This Cupriavidus metallidurans (strain ATCC 43123 / DSM 2839 / NBRC 102507 / CH34) (Ralstonia metallidurans) protein is Glutamyl-tRNA(Gln) amidotransferase subunit A.